The sequence spans 173 residues: Large ribosomal subunit protein uL5 (173 aa).

The protein belongs to the universal ribosomal protein uL5 family. As to quaternary structure, part of the 50S ribosomal subunit; contacts the 5S rRNA and probably tRNA. Forms a bridge to the 30S subunit in the 70S ribosome.

Its function is as follows. This is one of the proteins that bind and probably mediate the attachment of the 5S RNA into the large ribosomal subunit, where it forms part of the central protuberance. In the 70S ribosome it contacts protein S13 of the 30S subunit (bridge B1b), connecting the 2 subunits; this bridge is implicated in subunit movement. May contact the P site tRNA; the 5S rRNA and some of its associated proteins might help stabilize positioning of ribosome-bound tRNAs. This Nitrosopumilus maritimus (strain SCM1) protein is Large ribosomal subunit protein uL5.